A 510-amino-acid chain; its full sequence is Lysine--tRNA ligase (510 aa).

Residues Glu-420 and Glu-427 each coordinate Mg(2+).

This sequence belongs to the class-II aminoacyl-tRNA synthetase family. Homodimer. Mg(2+) is required as a cofactor.

The protein localises to the cytoplasm. It catalyses the reaction tRNA(Lys) + L-lysine + ATP = L-lysyl-tRNA(Lys) + AMP + diphosphate. The chain is Lysine--tRNA ligase from Vibrio vulnificus (strain CMCP6).